Here is a 247-residue protein sequence, read N- to C-terminus: Lipoprotein-releasing system ATP-binding protein LolD 2 (247 aa).

Residues 19 to 247 (LEARKLVKSY…QDGRLQACGG (229 aa)) form the ABC transporter domain. An ATP-binding site is contributed by 56–63 (GASGSGKT).

This sequence belongs to the ABC transporter superfamily. Lipoprotein translocase (TC 3.A.1.125) family. In terms of assembly, the complex is composed of two ATP-binding proteins (LolD) and two transmembrane proteins (LolC and LolE).

The protein localises to the cell inner membrane. In terms of biological role, part of the ABC transporter complex LolCDE involved in the translocation of mature outer membrane-directed lipoproteins, from the inner membrane to the periplasmic chaperone, LolA. Responsible for the formation of the LolA-lipoprotein complex in an ATP-dependent manner. In Chlorobaculum tepidum (strain ATCC 49652 / DSM 12025 / NBRC 103806 / TLS) (Chlorobium tepidum), this protein is Lipoprotein-releasing system ATP-binding protein LolD 2.